We begin with the raw amino-acid sequence, 466 residues long: 3-isopropylmalate dehydratase large subunit (466 aa).

Cys-347, Cys-407, and Cys-410 together coordinate [4Fe-4S] cluster.

The protein belongs to the aconitase/IPM isomerase family. LeuC type 1 subfamily. Heterodimer of LeuC and LeuD. The cofactor is [4Fe-4S] cluster.

The enzyme catalyses (2R,3S)-3-isopropylmalate = (2S)-2-isopropylmalate. Its pathway is amino-acid biosynthesis; L-leucine biosynthesis; L-leucine from 3-methyl-2-oxobutanoate: step 2/4. Its function is as follows. Catalyzes the isomerization between 2-isopropylmalate and 3-isopropylmalate, via the formation of 2-isopropylmaleate. This chain is 3-isopropylmalate dehydratase large subunit, found in Citrobacter koseri (strain ATCC BAA-895 / CDC 4225-83 / SGSC4696).